A 65-amino-acid polypeptide reads, in one-letter code: MLIIPIKDGENIDRALKRYKRKFDKTGVVRQLRKRQAFIKPSVINRAMIQKAAYVQNMREGLENM.

This sequence belongs to the bacterial ribosomal protein bS21 family.

In Flavobacterium psychrophilum (strain ATCC 49511 / DSM 21280 / CIP 103535 / JIP02/86), this protein is Small ribosomal subunit protein bS21.